The following is a 450-amino-acid chain: 5-amino-6-(D-ribitylamino)uracil--L-tyrosine 4-hydroxyphenyl transferase (450 aa).

The tract at residues 1 to 24 (MPDVPETVGTPDGSTEFEHRPTTD) is disordered. A Radical SAM core domain is found at 82 to 350 (VTFVANLNNN…MIAVSRLFLD (269 aa)). [4Fe-4S] cluster is bound by residues cysteine 96, cysteine 100, and cysteine 103. The segment at 430 to 450 (PDADVLGPQLGPRADGTPLLD) is disordered.

The protein belongs to the radical SAM superfamily. CofH family. Consists of two subunits, CofG and CofH. The cofactor is [4Fe-4S] cluster.

The enzyme catalyses 5-amino-6-(D-ribitylamino)uracil + L-tyrosine + S-adenosyl-L-methionine = 5-amino-5-(4-hydroxybenzyl)-6-(D-ribitylimino)-5,6-dihydrouracil + 2-iminoacetate + 5'-deoxyadenosine + L-methionine + H(+). It functions in the pathway cofactor biosynthesis; coenzyme F0 biosynthesis. In terms of biological role, catalyzes the radical-mediated synthesis of 5-amino-5-(4-hydroxybenzyl)-6-(D-ribitylimino)-5,6-dihydrouracil from 5-amino-6-(D-ribitylamino)uracil and L-tyrosine. This chain is 5-amino-6-(D-ribitylamino)uracil--L-tyrosine 4-hydroxyphenyl transferase, found in Haloarcula marismortui (strain ATCC 43049 / DSM 3752 / JCM 8966 / VKM B-1809) (Halobacterium marismortui).